Consider the following 681-residue polypeptide: Probable glutamate carboxypeptidase LAMP1 (681 aa).

Topologically, residues 1 to 6 (MSKSKS) are cytoplasmic. A helical; Signal-anchor for type II membrane protein transmembrane segment spans residues 7–24 (LAFVIAALSYSFFSLFSS). The Extracellular segment spans residues 25-681 (PPKSHYHELF…ASLVLKGELI (657 aa)). Asparagine 42, asparagine 140, asparagine 166, and asparagine 299 each carry an N-linked (GlcNAc...) asparagine glycan. Residues 241 to 527 (SVDGCERLSD…SVLGLVALRL (287 aa)) form a catalytic region. 2 residues coordinate Zn(2+): histidine 333 and aspartate 343. The Nucleophile role is filled by glutamate 380. Glutamate 381 and aspartate 409 together coordinate Zn(2+). N-linked (GlcNAc...) asparagine glycosylation occurs at asparagine 441. Histidine 493 serves as a coordination point for Zn(2+). N-linked (GlcNAc...) asparagine glycosylation occurs at asparagine 536.

Belongs to the peptidase M28 family. M28B subfamily. Zn(2+) serves as cofactor.

The protein localises to the endoplasmic reticulum membrane. The catalysed reaction is Release of an unsubstituted, C-terminal glutamyl residue, typically from Ac-Asp-Glu or folylpoly-gamma-glutamates.. In terms of biological role, acts in association with AMP1 to suppress ectopic stem cell niche formation in the shoot apical meristem (SAM) independently of cytokinin signaling pathway. In Arabidopsis thaliana (Mouse-ear cress), this protein is Probable glutamate carboxypeptidase LAMP1.